Here is an 82-residue protein sequence, read N- to C-terminus: ATP synthase subunit c (82 aa).

A run of 2 helical transmembrane segments spans residues 18-38 (LGEA…IGKI) and 61-81 (IIAA…CGFL).

This sequence belongs to the ATPase C chain family. F-type ATPases have 2 components, F(1) - the catalytic core - and F(0) - the membrane proton channel. F(1) has five subunits: alpha(3), beta(3), gamma(1), delta(1), epsilon(1). F(0) has three main subunits: a(1), b(2) and c(10-14). The alpha and beta chains form an alternating ring which encloses part of the gamma chain. F(1) is attached to F(0) by a central stalk formed by the gamma and epsilon chains, while a peripheral stalk is formed by the delta and b chains.

It localises to the cell inner membrane. In terms of biological role, f(1)F(0) ATP synthase produces ATP from ADP in the presence of a proton or sodium gradient. F-type ATPases consist of two structural domains, F(1) containing the extramembraneous catalytic core and F(0) containing the membrane proton channel, linked together by a central stalk and a peripheral stalk. During catalysis, ATP synthesis in the catalytic domain of F(1) is coupled via a rotary mechanism of the central stalk subunits to proton translocation. Key component of the F(0) channel; it plays a direct role in translocation across the membrane. A homomeric c-ring of between 10-14 subunits forms the central stalk rotor element with the F(1) delta and epsilon subunits. This Azobacteroides pseudotrichonymphae genomovar. CFP2 protein is ATP synthase subunit c.